The following is a 194-amino-acid chain: UPF0301 protein CBU_2093 (194 aa).

It belongs to the UPF0301 (AlgH) family.

In Coxiella burnetii (strain RSA 493 / Nine Mile phase I), this protein is UPF0301 protein CBU_2093.